A 309-amino-acid polypeptide reads, in one-letter code: Jacalin-related lectin 25 (309 aa).

Residues 8–190 (MFKVGPIGSQ…LTSIGIYVCP (183 aa)) enclose the Jacalin-type lectin domain.

The protein belongs to the jacalin lectin family.

This chain is Jacalin-related lectin 25 (JAL25), found in Arabidopsis thaliana (Mouse-ear cress).